A 1258-amino-acid polypeptide reads, in one-letter code: Cohesin subunit SA-1 (1258 aa).

The interval 1 to 84 is disordered; the sequence is MITSELPVLQ…HPQQNGEGEP (84 aa). Residues 10–19 show a composition bias toward polar residues; that stretch reads QDSTNETTAH. Ser-24 carries the post-translational modification Phosphoserine. Over residues 53-62 the composition is skewed to basic and acidic residues; sequence SPGEKSRIEA. In terms of domain architecture, SCD spans 296–381; sequence FVHRYRDAIA…NRFKDRIVSM (86 aa). Ser-756, Ser-1062, and Ser-1065 each carry phosphoserine. Disordered stretches follow at residues 1055–1096 and 1129–1148; these read GGED…SLDN and MGDQ…DFLH. Over residues 1062–1074 the composition is skewed to low complexity; sequence SVNSGSSSSKTSS. A compositionally biased stretch (basic residues) spans 1076–1087; sequence RNKKGRPPLHKK. Residue Ser-1093 is modified to Phosphoserine. Residues 1137–1146 are compositionally biased toward basic and acidic residues; that stretch reads ESEHGSEPDF. Residue Lys-1161 forms a Glycyl lysine isopeptide (Lys-Gly) (interchain with G-Cter in SUMO2) linkage.

This sequence belongs to the SCC3 family. As to quaternary structure, cohesin complexes are composed of a heterodimer between a SMC1 protein (SMC1A or SMC1B) and SMC3, which are attached via their hinge domain, and RAD21 which link them at their heads, and one STAG protein (STAG1, STAG2 or STAG3). In cohesin complexes, STAG1 is mutually exclusive with STAG2 and STAG3. Interacts directly with RAD21 in cohesin complex. The cohesin complex interacts with the cohesin loading complex subunits NIPBL/Scc2 (via HEAT repeats) and MAU2/Scc4. NIPBL directly contacts all members of the complex, RAD21, SMC1A/B, SMC3 and STAG1. In terms of processing, phosphorylated by PLK1. The large dissociation of cohesin from chromosome arms during prophase is partly due to its phosphorylation.

The protein localises to the nucleus. The protein resides in the chromosome. It is found in the centromere. Functionally, component of cohesin complex, a complex required for the cohesion of sister chromatids after DNA replication. The cohesin complex apparently forms a large proteinaceous ring within which sister chromatids can be trapped. At anaphase, the complex is cleaved and dissociates from chromatin, allowing sister chromatids to segregate. The cohesin complex may also play a role in spindle pole assembly during mitosis. The sequence is that of Cohesin subunit SA-1 (STAG1) from Homo sapiens (Human).